We begin with the raw amino-acid sequence, 323 residues long: Methionine adenosyltransferase 2 subunit beta (323 aa).

NADP(+)-binding positions include 26 to 29, 49 to 51, 60 to 61, Cys-82, Arg-86, Tyr-146, and Leu-172; these read TGLL, YNR, and NL. The tract at residues 308–323 is required for interaction with MAT2A; the sequence is LWPFQHDKRWRQTVFH.

The protein belongs to the dTDP-4-dehydrorhamnose reductase family. MAT2B subfamily. Heterotrimer; composed of a catalytic mat2a homodimer that binds one regulatory mat2b chain. Heterohexamer; composed of a central, catalytic mat2a homotetramer flanked on either side by a regulatory mat2b chain. NADP binding increases the affinity for mat2a.

It participates in amino-acid biosynthesis; S-adenosyl-L-methionine biosynthesis; S-adenosyl-L-methionine from L-methionine: step 1/1. Its function is as follows. Regulatory subunit of S-adenosylmethionine synthetase 2, an enzyme that catalyzes the formation of S-adenosylmethionine from methionine and ATP. Regulates MAT2A catalytic activity by changing its kinetic properties, increasing its affinity for L-methionine. Can bind NADP (in vitro). In Danio rerio (Zebrafish), this protein is Methionine adenosyltransferase 2 subunit beta (mat2b).